The sequence spans 361 residues: Fructose-1,6-bisphosphatase class 1 2 (361 aa).

Mg(2+) is bound by residues Glu-110, Asp-134, Leu-136, and Asp-137. Substrate is bound by residues 137–140 (DGSS), Asn-231, Tyr-264, and Lys-294. A Mg(2+)-binding site is contributed by Glu-300.

This sequence belongs to the FBPase class 1 family. Homotetramer. The cofactor is Mg(2+).

The protein localises to the cytoplasm. The enzyme catalyses beta-D-fructose 1,6-bisphosphate + H2O = beta-D-fructose 6-phosphate + phosphate. The protein operates within carbohydrate biosynthesis; gluconeogenesis. The chain is Fructose-1,6-bisphosphatase class 1 2 from Salinibacter ruber (strain DSM 13855 / M31).